Here is a 275-residue protein sequence, read N- to C-terminus: Phosphatidylglycerol--prolipoprotein diacylglyceryl transferase (275 aa).

Transmembrane regions (helical) follow at residues 22-42, 61-81, 96-116, 125-145, 177-197, 204-224, and 238-258; these read LSVRWYGLMYLFGFAFAMWLA, LLFYGFLGVILGGRVGYVLFY, IWTGGMSFHGGLIGVITAMIW, FFTVADFVAPLIPFGLGVGRI, SQLYQFALEGVVLFIILNLFW, GAISGLFLFCYGLFRFLVEFV, and ISMGQILSMPMIVAGALMVWA. An a 1,2-diacyl-sn-glycero-3-phospho-(1'-sn-glycerol)-binding site is contributed by R144.

Belongs to the Lgt family.

It is found in the cell inner membrane. It carries out the reaction L-cysteinyl-[prolipoprotein] + a 1,2-diacyl-sn-glycero-3-phospho-(1'-sn-glycerol) = an S-1,2-diacyl-sn-glyceryl-L-cysteinyl-[prolipoprotein] + sn-glycerol 1-phosphate + H(+). The protein operates within protein modification; lipoprotein biosynthesis (diacylglyceryl transfer). Its function is as follows. Catalyzes the transfer of the diacylglyceryl group from phosphatidylglycerol to the sulfhydryl group of the N-terminal cysteine of a prolipoprotein, the first step in the formation of mature lipoproteins. The protein is Phosphatidylglycerol--prolipoprotein diacylglyceryl transferase of Aeromonas salmonicida (strain A449).